Here is a 427-residue protein sequence, read N- to C-terminus: Serine--tRNA ligase (427 aa).

229–231 is a binding site for L-serine; that stretch reads TAE. 260-262 contacts ATP; sequence RSE. Glutamate 283 serves as a coordination point for L-serine. 347–350 serves as a coordination point for ATP; sequence EISS. Serine 383 lines the L-serine pocket.

The protein belongs to the class-II aminoacyl-tRNA synthetase family. Type-1 seryl-tRNA synthetase subfamily. As to quaternary structure, homodimer. The tRNA molecule binds across the dimer.

Its subcellular location is the cytoplasm. It catalyses the reaction tRNA(Ser) + L-serine + ATP = L-seryl-tRNA(Ser) + AMP + diphosphate + H(+). The catalysed reaction is tRNA(Sec) + L-serine + ATP = L-seryl-tRNA(Sec) + AMP + diphosphate + H(+). It participates in aminoacyl-tRNA biosynthesis; selenocysteinyl-tRNA(Sec) biosynthesis; L-seryl-tRNA(Sec) from L-serine and tRNA(Sec): step 1/1. In terms of biological role, catalyzes the attachment of serine to tRNA(Ser). Is also able to aminoacylate tRNA(Sec) with serine, to form the misacylated tRNA L-seryl-tRNA(Sec), which will be further converted into selenocysteinyl-tRNA(Sec). The chain is Serine--tRNA ligase from Nitrosococcus oceani (strain ATCC 19707 / BCRC 17464 / JCM 30415 / NCIMB 11848 / C-107).